A 490-amino-acid chain; its full sequence is Bifunctional dihydrocamalexate synthase/camalexin synthase (490 aa).

Residues 1 to 21 (MSVFLCFLVLLPLILIFLNVL) form a helical membrane-spanning segment.

The protein belongs to the cytochrome P450 family.

It is found in the membrane. The enzyme catalyses 2-(L-cystein-S-yl)-2-(1H-indol-3-yl)-acetonitrile + 2 reduced [NADPH--hemoprotein reductase] + 2 O2 = camalexin + hydrogen cyanide + 2 oxidized [NADPH--hemoprotein reductase] + CO2 + 4 H2O + 2 H(+). The catalysed reaction is 2-(L-cystein-S-yl)-2-(1H-indol-3-yl)-acetonitrile + reduced [NADPH--hemoprotein reductase] + O2 = (R)-dihydrocamalexate + hydrogen cyanide + oxidized [NADPH--hemoprotein reductase] + 2 H2O + 2 H(+). It carries out the reaction (R)-dihydrocamalexate + reduced [NADPH--hemoprotein reductase] + O2 = camalexin + oxidized [NADPH--hemoprotein reductase] + CO2 + 2 H2O. Its function is as follows. Multifunctional enzyme involved in the biosynthesis of the indole-derived phytoalexin camalexin. Catalyzes two reactions, the formation of dihydrocamalexate from indole-3-acetonitrile-cysteine conjugate and the oxidative decarboxylation of dihydrocamalexate which is the final step in camalexin biosynthesis. Required for the resistance to the fungal pathogens A.brassicicola, B.cinerea, B.elliptica, B.tulipae, L.maculans and Colletotrichum higginsianum. Seems not to be required for resistance to P.syringae, P.porri, and not involved in age-related resistance. This chain is Bifunctional dihydrocamalexate synthase/camalexin synthase (CYP71B15), found in Arabidopsis thaliana (Mouse-ear cress).